The sequence spans 211 residues: Protein-methionine-sulfoxide reductase heme-binding subunit MsrQ (211 aa).

A run of 5 helical transmembrane segments spans residues 17 to 37, 54 to 74, 82 to 102, 116 to 136, and 153 to 173; these read LAGLLPFLWLVWAINHGGLGA, FLLATLLITPLARYVKQPLLI, LWCFAWATLHLTSYALLELGV, PYLTLGIISWVILLALAFTST, and FVYLVAILAPIHYLWSVKIIS.

This sequence belongs to the MsrQ family. Heterodimer of a catalytic subunit (MsrP) and a heme-binding subunit (MsrQ). FMN serves as cofactor. It depends on heme b as a cofactor.

The protein localises to the cell inner membrane. Its function is as follows. Part of the MsrPQ system that repairs oxidized periplasmic proteins containing methionine sulfoxide residues (Met-O), using respiratory chain electrons. Thus protects these proteins from oxidative-stress damage caused by reactive species of oxygen and chlorine generated by the host defense mechanisms. MsrPQ is essential for the maintenance of envelope integrity under bleach stress, rescuing a wide series of structurally unrelated periplasmic proteins from methionine oxidation, including the primary periplasmic chaperone SurA and the lipoprotein Pal. MsrQ provides electrons for reduction to the reductase catalytic subunit MsrP, using the quinone pool of the respiratory chain. This chain is Protein-methionine-sulfoxide reductase heme-binding subunit MsrQ, found in Escherichia coli (strain SMS-3-5 / SECEC).